Reading from the N-terminus, the 873-residue chain is Putative receptor-like protein kinase At5g39000 (873 aa).

Positions M1–G21 are cleaved as a signal peptide. Over A22 to T445 the chain is Extracellular. N-linked (GlcNAc...) asparagine glycosylation is found at N49, N64, N138, N168, N216, N266, N300, N340, and N437. Residues L446 to M466 form a helical membrane-spanning segment. Residues K467–R873 lie on the Cytoplasmic side of the membrane. The segment at S472–P494 is disordered. Residues F518–A803 enclose the Protein kinase domain. Residues I524–V532 and K547 each bind ATP. D646 acts as the Proton acceptor in catalysis. The disordered stretch occupies residues L813 to T843. Polar residues predominate over residues S833–T843.

This sequence belongs to the protein kinase superfamily. Ser/Thr protein kinase family.

The protein resides in the membrane. This chain is Putative receptor-like protein kinase At5g39000, found in Arabidopsis thaliana (Mouse-ear cress).